A 1024-amino-acid chain; its full sequence is Seizure 6-like protein (1024 aa).

Positions 1-28 are cleaved as a signal peptide; it reads MPAARPPAAGLRGISLFLALLLGSPAAA. Residues 29–958 are Extracellular-facing; the sequence is LERDALPEGD…ETSLEGGNMA (930 aa). 3 disordered regions span residues 33–77, 108–184, and 212–234; these read ALPE…SQSA, RPKH…EVPL, and AHTL…EAPQ. Residue S49 is glycosylated (O-linked (GalNAc...) serine). Residues 56–66 show a composition bias toward basic and acidic residues; sequence SPGKEHPEERV. Over residues 110 to 120 the composition is skewed to basic residues; it reads KHALPPKKKLP. Residues 138–162 show a composition bias toward polar residues; it reads SAATVQRAGSQPASQGLDLLSSSTE. 2 O-glycosylated at one site regions span residues 147–161 and 176–180; these read SQPA…SSST and SEEAS. The cysteines at positions 281 and 308 are disulfide-linked. The region spanning 281 to 389 is the CUB 1 domain; sequence CSVSFSNPEG…GTFQLHYQAF (109 aa). N-linked (GlcNAc...) asparagine glycosylation is found at N311, N328, and N350. The Sushi 1 domain maps to 391–450; that stretch reads LSCNFPRRPDSGDVTVMDLHSGGVAHFHCHLGYELQGAKMLTCINASKPHWSSQEPICSA. 2 cysteine pairs are disulfide-bonded: C393-C433 and C419-C448. N-linked (GlcNAc...) asparagine glycosylation is found at N435, N458, N474, N514, N576, N618, N674, and N742. In terms of domain architecture, CUB 2 spans 452-562; that stretch reads CGGAVHNATI…STFNIRFEAF (111 aa). One can recognise a Sushi 2 domain in the interval 565 to 626; the sequence is GHCYEPYIQN…WNDTEPLCRA (62 aa). 2 cysteine pairs are disulfide-bonded: C567-C609 and C594-C624. One can recognise a CUB 3 domain in the interval 628–739; that stretch reads CGGELSAVAG…QGFIMNYIEV (112 aa). Sushi domains are found at residues 743-802, 804-867, and 871-932; these read DSCS…FCEK, MYCT…HCVS, and LACD…VCKV. 6 cysteine pairs are disulfide-bonded: C745/C787, C773/C800, C806/C848, C834/C865, C873/C915, and C901/C930. The chain crosses the membrane as a helical span at residues 959–979; sequence LAIFIPVLIISLLLGGAYIYI. Over 980–1024 the chain is Cytoplasmic; it reads TRCRYYSNLRLPLMYSHPYSQITVETEFDNPIYETGETREYEVSI.

The protein belongs to the SEZ6 family. O-glycosylated. In terms of tissue distribution, widely expressed, including adult and fetal brains and lungs. Not expressed in all lung cancer cell lines.

The protein resides in the endoplasmic reticulum membrane. In terms of biological role, may contribute to specialized endoplasmic reticulum functions in neurons. The protein is Seizure 6-like protein (SEZ6L) of Homo sapiens (Human).